Reading from the N-terminus, the 310-residue chain is Carbamate kinase (310 aa).

It belongs to the carbamate kinase family.

The protein resides in the cytoplasm. It carries out the reaction hydrogencarbonate + NH4(+) + ATP = carbamoyl phosphate + ADP + H2O + H(+). It participates in metabolic intermediate metabolism; carbamoyl phosphate degradation; CO(2) and NH(3) from carbamoyl phosphate: step 1/1. The sequence is that of Carbamate kinase (arcC) from Staphylococcus epidermidis (strain ATCC 35984 / DSM 28319 / BCRC 17069 / CCUG 31568 / BM 3577 / RP62A).